Here is a 339-residue protein sequence, read N- to C-terminus: Methylglutaconyl-CoA hydratase, mitochondrial (339 aa).

Residues 1 to 67 constitute a mitochondrion transit peptide; that stretch reads MAAAVAAAPG…AGGPAPKRGY (67 aa). Lysine 100 is modified (N6-acetyllysine; alternate). N6-succinyllysine; alternate is present on lysine 100. The tract at residues 105 to 119 is RNA-binding; the sequence is KNLIKMLSKAVDALK. The residue at position 109 (lysine 109) is an N6-succinyllysine. Residues lysine 113 and lysine 144 each carry the N6-acetyllysine; alternate modification. N6-succinyllysine; alternate is present on residues lysine 113 and lysine 144. Lysine 148 and lysine 160 each carry N6-succinyllysine. 2 positions are modified to N6-acetyllysine; alternate: lysine 204 and lysine 211. An N6-succinyllysine; alternate mark is found at lysine 204 and lysine 211. Lysine 329 carries the post-translational modification N6-succinyllysine.

It belongs to the enoyl-CoA hydratase/isomerase family. Homohexamer.

It localises to the mitochondrion. It carries out the reaction (3S)-3-hydroxy-3-methylglutaryl-CoA = 3-methyl-(2E)-glutaconyl-CoA + H2O. The enzyme catalyses (3S)-citramalyl-CoA = itaconyl-CoA + H2O. It catalyses the reaction 3-hydroxyisovaleryl-CoA = 3-methylbut-2-enoyl-CoA + H2O. The catalysed reaction is (S)-3-hydroxyglutaryl-CoA = (2E)-glutaconyl-CoA + H2O. It functions in the pathway amino-acid degradation; L-leucine degradation; (S)-3-hydroxy-3-methylglutaryl-CoA from 3-isovaleryl-CoA: step 3/3. Catalyzes the fifth step in the leucine degradation pathway, the reversible hydration of 3-methylglutaconyl-CoA (3-MG-CoA) to 3-hydroxy-3-methylglutaryl-CoA (HMG-CoA). Can catalyze the reverse reaction but at a much lower rate in vitro. HMG-CoA is then quickly degraded by another enzyme (such as HMG-CoA lyase) to give acetyl-CoA and acetoacetate. Uses other substrates such as (2E)-glutaconyl-CoA efficiently in vitro, and to a lesser extent 3-methylcrotonyl-CoA (3-methyl-(2E)-butenoyl-CoA), crotonyl-CoA ((2E)-butenoyl-CoA) and 3-hydroxybutanoyl-CoA (the missing carboxylate reduces affinity to the active site). Originally it was identified as an RNA-binding protein as it binds to AU-rich elements (AREs) in vitro. AREs direct rapid RNA degradation and mRNA deadenylation. Might have itaconyl-CoA hydratase activity, converting itaconyl-CoA into citramalyl-CoA in the C5-dicarboxylate catabolism pathway. The C5-dicarboxylate catabolism pathway is required to detoxify itaconate, an antimicrobial metabolite and immunomodulator produced by macrophages during certain infections, that can act as a vitamin B12-poisoning metabolite. The polypeptide is Methylglutaconyl-CoA hydratase, mitochondrial (AUH) (Homo sapiens (Human)).